Consider the following 481-residue polypeptide: Subtilisin-like protease 1 (481 aa).

The signal sequence occupies residues 1 to 19; it reads MGVFRFISISLAAVSAANA. Residues 20–116 constitute a propeptide that is removed on maturation; it reads AQILSMPHAQ…VEPDTIISVH (97 aa). Positions 34-115 constitute an Inhibitor I9 domain; that stretch reads SYIVMMKDDT…FVEPDTIISV (82 aa). The region spanning 126-400 is the Peptidase S8 domain; sequence SWGLARISSS…NVLINNGGAK (275 aa). Catalysis depends on charge relay system residues Asp158 and His190. The disordered stretch occupies residues 175–198; the sequence is GSNQVNDGDDNDRSGHGTHTSGTM. An N-linked (GlcNAc...) asparagine glycan is attached at Asn251. The segment at 281–312 is disordered; it reads GNDNTDARSSSPASEPSVCTVGASAEDDSRSS. Positions 282-294 are enriched in polar residues; that stretch reads NDNTDARSSSPAS. The active-site Charge relay system is the Ser345. The disordered stretch occupies residues 379–455; the sequence is ASISDVGPGT…HPHTPFPGGD (77 aa). Pro residues predominate over residues 424 to 450; it reads PQQPAPGEPSTPAPAPMPPTPQHPHTP.

Belongs to the peptidase S8 family.

The protein localises to the secreted. Secreted subtilisin-like serine protease with keratinolytic activity that contributes to pathogenicity. This is Subtilisin-like protease 1 (SUB1) from Arthroderma gypseum (strain ATCC MYA-4604 / CBS 118893) (Microsporum gypseum).